Consider the following 289-residue polypeptide: uncharacterized protein (289 aa).

A compositionally biased stretch (basic and acidic residues) spans 1-20; sequence MNPMDRQTEGQEPQHQDRQP. The disordered stretch occupies residues 1-39; it reads MNPMDRQTEGQEPQHQDRQPGIESKMNPLPLSEDEDYRG. Residue 49–73 participates in NADP(+) binding; the sequence is IITGGDSGIGRAAAIAFAKEGADIS. Position 181 (serine 181) interacts with substrate. The active-site Proton acceptor is tyrosine 194.

The protein belongs to the short-chain dehydrogenases/reductases (SDR) family.

This is an uncharacterized protein from Bacillus subtilis (strain 168).